Here is a 1174-residue protein sequence, read N- to C-terminus: HEAT repeat-containing protein 6 (1174 aa).

The stretch at 168-207 is one HEAT 1 repeat; that stretch reads NELLGPTGILVNLCDPSQPDPELWREAIHCMANLCLGVPG. Disordered regions lie at residues 304–346 and 373–392; these read GRSP…EELK and LGPQKSPLDPHQGQVGKDHF. Residues 323–335 show a composition bias toward basic residues; that stretch reads SKKKRKAGKQKKG. Residues 336–346 are compositionally biased toward basic and acidic residues; it reads HQGEESKEELK. HEAT repeat units follow at residues 460–498, 523–560, and 566–603; these read GIGSPQSVSLMTIALKDSSPKTRACALQVLSAILDGSKQ, SIRELHRCLLLAIVAESSAQTLTQIIKCLANLVSNAPY, and GLLTRVWNQIKPYIRNKDVNVRVSSLTLLGAIVSAQVS. Residues 619–648 form a disordered region; it reads SQNSGSATPSDPESNRKESMLEGGKKNGLH. Basic and acidic residues predominate over residues 631 to 648; that stretch reads ESNRKESMLEGGKKNGLH.

The polypeptide is HEAT repeat-containing protein 6 (heatr6) (Xenopus laevis (African clawed frog)).